We begin with the raw amino-acid sequence, 158 residues long: NAD(P)H-quinone oxidoreductase subunit N (158 aa).

It belongs to the complex I NdhN subunit family. As to quaternary structure, NDH-1 can be composed of about 15 different subunits; different subcomplexes with different compositions have been identified which probably have different functions.

The protein resides in the cellular thylakoid membrane. It catalyses the reaction a plastoquinone + NADH + (n+1) H(+)(in) = a plastoquinol + NAD(+) + n H(+)(out). It carries out the reaction a plastoquinone + NADPH + (n+1) H(+)(in) = a plastoquinol + NADP(+) + n H(+)(out). Its function is as follows. NDH-1 shuttles electrons from an unknown electron donor, via FMN and iron-sulfur (Fe-S) centers, to quinones in the respiratory and/or the photosynthetic chain. The immediate electron acceptor for the enzyme in this species is believed to be plastoquinone. Couples the redox reaction to proton translocation, and thus conserves the redox energy in a proton gradient. Cyanobacterial NDH-1 also plays a role in inorganic carbon-concentration. In Prochlorococcus marinus (strain MIT 9301), this protein is NAD(P)H-quinone oxidoreductase subunit N.